The sequence spans 350 residues: Transmembrane protein 185A (350 aa).

Transmembrane regions (helical) follow at residues 16–36, 41–61, 81–101, 111–131, 177–197, 211–231, and 240–260; these read LIYA…DGII, WAVF…ASVG, FKAM…EVLV, FWLL…AACV, ILMS…VLFL, ITMA…EILL, and AFSC…LMAT. The tract at residues 298 to 350 is mediates interaction with MAP1B; the sequence is DLHHEDNEETEETPVPEPPKIAPMFRKKARVVITQSPGKYALPPPKLNIEMPD.

The protein belongs to the TMEM185 family. Interacts with MAP1B.

It is found in the cell projection. The protein resides in the dendrite. It localises to the membrane. The sequence is that of Transmembrane protein 185A (TMEM185A) from Pongo abelii (Sumatran orangutan).